Consider the following 734-residue polypeptide: Photosystem I P700 chlorophyll a apoprotein A2 (734 aa).

8 consecutive transmembrane segments (helical) span residues 46-69 (IFAS…FHVA), 135-158 (LYTG…FHLQ), 175-199 (LDHH…HVAI), 273-291 (IAHH…GHMY), 330-353 (LHFQ…QHMY), 369-395 (AALY…IFFI), 417-439 (AIIS…LYVH), and 517-535 (FLVH…LILV). Cys559 and Cys568 together coordinate [4Fe-4S] cluster. 2 helical membrane passes run 575–596 (AFYL…YWHW) and 643–665 (LSVW…MFLI). Chlorophyll a is bound by residues His654, Met662, and Tyr670. Trp671 contributes to the phylloquinone binding site. Residues 707-727 (LVGLAHFSVGYIFTYAAFLIA) form a helical membrane-spanning segment.

Belongs to the PsaA/PsaB family. In terms of assembly, the PsaA/B heterodimer binds the P700 chlorophyll special pair and subsequent electron acceptors. PSI consists of a core antenna complex that captures photons, and an electron transfer chain that converts photonic excitation into a charge separation. The eukaryotic PSI reaction center is composed of at least 11 subunits. It depends on P700 is a chlorophyll a/chlorophyll a' dimer, A0 is one or more chlorophyll a, A1 is one or both phylloquinones and FX is a shared 4Fe-4S iron-sulfur center. as a cofactor.

The protein resides in the plastid. It localises to the chloroplast thylakoid membrane. It catalyses the reaction reduced [plastocyanin] + hnu + oxidized [2Fe-2S]-[ferredoxin] = oxidized [plastocyanin] + reduced [2Fe-2S]-[ferredoxin]. Functionally, psaA and PsaB bind P700, the primary electron donor of photosystem I (PSI), as well as the electron acceptors A0, A1 and FX. PSI is a plastocyanin-ferredoxin oxidoreductase, converting photonic excitation into a charge separation, which transfers an electron from the donor P700 chlorophyll pair to the spectroscopically characterized acceptors A0, A1, FX, FA and FB in turn. Oxidized P700 is reduced on the lumenal side of the thylakoid membrane by plastocyanin. The sequence is that of Photosystem I P700 chlorophyll a apoprotein A2 from Cycas taitungensis (Prince sago).